Reading from the N-terminus, the 179-residue chain is Large ribosomal subunit protein uL5 (179 aa).

This sequence belongs to the universal ribosomal protein uL5 family. In terms of assembly, part of the 50S ribosomal subunit; part of the 5S rRNA/L5/L18/L25 subcomplex. Contacts the 5S rRNA and the P site tRNA. Forms a bridge to the 30S subunit in the 70S ribosome.

This is one of the proteins that bind and probably mediate the attachment of the 5S RNA into the large ribosomal subunit, where it forms part of the central protuberance. In the 70S ribosome it contacts protein S13 of the 30S subunit (bridge B1b), connecting the 2 subunits; this bridge is implicated in subunit movement. Contacts the P site tRNA; the 5S rRNA and some of its associated proteins might help stabilize positioning of ribosome-bound tRNAs. The chain is Large ribosomal subunit protein uL5 from Staphylococcus saprophyticus subsp. saprophyticus (strain ATCC 15305 / DSM 20229 / NCIMB 8711 / NCTC 7292 / S-41).